The sequence spans 1518 residues: Putative cellulose synthase 3 (1518 aa).

A catalytic region spans residues 1–731 (MYGTWFTTGK…EEKLEKQSFV (731 aa)). The next 3 membrane-spanning stretches (helical) occupy residues 24 to 44 (PVWVPVVLGVVLMAFVGSVRI), 71 to 91 (ITVFLMMLSLLVSLRYIVWRL), and 105 to 125 (LAVLLLLAEAYALMTLCLSYF). Residues 144 to 237 (QWPSVDVFVP…FAVIFDCDHV (94 aa)) are catalytic subdomain A. Catalysis depends on residues Asp-186 and Asp-330. The interval 314–374 (EAVMGIGGFA…GQRVRWARGM (61 aa)) is catalytic subdomain B. Helical transmembrane passes span 404–424 (FLFAIPRLTFLVSPLAFLFLG), 428–448 (IAASPLAISVYALPHIFHSVI), 465–485 (IYETSLALFLVRITIVTLLQP), 514–534 (ILAGVLCAALLRGVFGIVWQF), and 543–563 (FILNTLWVVISLIIVLASIAV). One can recognise a PilZ domain in the interval 569-668 (QTRNAPRVSV…ERQVVSMVFG (100 aa)). Positions 732-1518 (LKPVPRSARH…IARDDLTGEL (787 aa)) are cyclic di-GMP binding domain. A disordered region spans residues 765 to 785 (APSPDQSGVTAETPFGDSNTG). The segment covering 768-785 (PDQSGVTAETPFGDSNTG) has biased composition (polar residues). A helical membrane pass occupies residues 1481-1501 (ALYLAGLAGAGLAALGVWAWL).

This sequence in the N-terminal section; belongs to the glycosyltransferase 2 family. The protein in the C-terminal section; belongs to the AcsB/BcsB family.

The protein resides in the cell inner membrane. The enzyme catalyses [(1-&gt;4)-beta-D-glucosyl](n) + UDP-alpha-D-glucose = [(1-&gt;4)-beta-D-glucosyl](n+1) + UDP + H(+). It participates in glycan metabolism; bacterial cellulose biosynthesis. The protein is Putative cellulose synthase 3 (bcsABII-B) of Komagataeibacter xylinus (Gluconacetobacter xylinus).